Here is a 242-residue protein sequence, read N- to C-terminus: ATP synthase subunit a (242 aa).

A run of 5 helical transmembrane segments spans residues 28–48 (LHGQ…LLVV), 89–109 (LPFV…GALI), 128–148 (INTT…AGLS), 193–213 (LVVA…AMFL), and 214–234 (GLFT…NYIG).

Belongs to the ATPase A chain family. In terms of assembly, F-type ATPases have 2 components, CF(1) - the catalytic core - and CF(0) - the membrane proton channel. CF(1) has five subunits: alpha(3), beta(3), gamma(1), delta(1), epsilon(1). CF(0) has four main subunits: a, b, b' and c.

The protein localises to the cellular thylakoid membrane. Functionally, key component of the proton channel; it plays a direct role in the translocation of protons across the membrane. This Synechococcus sp. (strain WH7803) protein is ATP synthase subunit a.